An 833-amino-acid chain; its full sequence is Major vault protein (833 aa).

MVP repeat units lie at residues 10–52 (RYYY…VSVP), 54–115 (RHYC…RKLQ), 119–170 (PNTG…TVIY), 171–223 (PNTA…TMLS), 224–278 (ELKA…VSLN), 280–328 (KEYV…LVVG), 329–380 (KEEA…MALD), and 381–433 (RNEG…SIKT).

As to quaternary structure, the vault ribonucleoprotein particle is a huge (400 A x 670 A) cage structure of 12.9 MDa. It consists of a dimer of half-vaults, with each half-vault comprising 39 identical major vault protein (MVP) chains, PARP4 and one or more vault RNAs (vRNAs).

Its subcellular location is the cytoplasm. It is found in the nucleus. Its function is as follows. Required for normal vault structure. Vaults are multi-subunit structures that may act as scaffolds for proteins involved in signal transduction. Vaults may also play a role in nucleo-cytoplasmic transport. The protein is Major vault protein of Leishmania braziliensis.